The chain runs to 243 residues: 1-(5-phosphoribosyl)-5-[(5-phosphoribosylamino)methylideneamino] imidazole-4-carboxamide isomerase (243 aa).

Asp8 serves as the catalytic Proton acceptor. Catalysis depends on Asp130, which acts as the Proton donor.

It belongs to the HisA/HisF family.

Its subcellular location is the cytoplasm. The catalysed reaction is 1-(5-phospho-beta-D-ribosyl)-5-[(5-phospho-beta-D-ribosylamino)methylideneamino]imidazole-4-carboxamide = 5-[(5-phospho-1-deoxy-D-ribulos-1-ylimino)methylamino]-1-(5-phospho-beta-D-ribosyl)imidazole-4-carboxamide. It functions in the pathway amino-acid biosynthesis; L-histidine biosynthesis; L-histidine from 5-phospho-alpha-D-ribose 1-diphosphate: step 4/9. This is 1-(5-phosphoribosyl)-5-[(5-phosphoribosylamino)methylideneamino] imidazole-4-carboxamide isomerase from Cellvibrio japonicus (strain Ueda107) (Pseudomonas fluorescens subsp. cellulosa).